Here is a 130-residue protein sequence, read N- to C-terminus: MAQAQYTGTGRRKNAVARVRLVPGTGKITVNKKDVEEYIPHADLRLVINQPFAVTSTQGSYDVFVNVNGGGYGGQSGAIRHGIARALLQVDPDFRDSLKRAGLLTRDARMVERKKPGLKKARKASQFSKR.

This sequence belongs to the universal ribosomal protein uS9 family.

This chain is Small ribosomal subunit protein uS9, found in Streptococcus suis (strain 98HAH33).